The primary structure comprises 156 residues: Small ribosomal subunit protein uS7 (156 aa).

It belongs to the universal ribosomal protein uS7 family. In terms of assembly, part of the 30S ribosomal subunit. Contacts proteins S9 and S11.

Its function is as follows. One of the primary rRNA binding proteins, it binds directly to 16S rRNA where it nucleates assembly of the head domain of the 30S subunit. Is located at the subunit interface close to the decoding center, probably blocks exit of the E-site tRNA. The chain is Small ribosomal subunit protein uS7 from Rhodospirillum centenum (strain ATCC 51521 / SW).